A 735-amino-acid chain; its full sequence is MTSWADIQKLASDLQRVQLSQSSKKLSEVNCIEVLQKLIASHRIDVVYTRDGHSYVTKNHLETEIKNECIAAGGRASLTDIAVALNIDFDHIEKTSRLIVSTDDEFTISNAEIFATEYVHRLRNELRTLLDEQGNQTTAALCKHWNLSSELLQSLLIEKLGSSDFQGVVDGDTIYTSSFLNARQLVLRAILIALTKITPISTIQKRVGLTPKRFWIAFENLQSLGEIPGTLIGSRTSPSCSYRPMMYDHLVKSCVLNQYRQNEFLEISTLKTLGVDAKPALEEVLGSSEFKKLVSMRSMFMTKELMDQCINAVQEDLQKSGISDVHLALQSLNLPLDTADEDEIGSKVANVEKDSHFAEGFVFKGAVLTEALRSIDKLLDVRAHEEVDRLEAEKKKQGGAKAAVKVQEETDDWGDGKKGGKGGKKNAKSVKGGSKSSAPSTSSNLSANISINSEELEIWLRESQSVPEEILSVIVEKLNQETTTLLRKKVQDIQAHQLVASVANSKKSLSAIGDKCRQLYDSFNTFETATSTFADPLGSDLRQYLLKTVGNEIALALLSYVMGVDNAHQLKEKQREETIENLPEMLRDPIRSVFASLKSTDDDALDKFHDAVYNCSAPSATSLALKKVDKKGRAEVGAKITAELHEQLCSQTEPATTLLLSVLYILAKAGRPTTASGKFVSQLVAQIKDLCPENVFDLLQACQKGVVTCIKNKGDEVAKEMLVNDISSLKQSIMP.

The disordered stretch occupies residues 389–445 (RLEAEKKKQGGAKAAVKVQEETDDWGDGKKGGKGGKKNAKSVKGGSKSSAPSTSSNL). Basic residues predominate over residues 419–428 (GGKGGKKNAK). Positions 429–445 (SVKGGSKSSAPSTSSNL) are enriched in low complexity.

It belongs to the UFL1 family.

Functionally, E3 UFM1-protein ligase that mediates ufmylation of target proteins. This Caenorhabditis elegans protein is E3 UFM1-protein ligase 1 homolog (ufl-1).